Here is a 338-residue protein sequence, read N- to C-terminus: Phenylalanine--tRNA ligase alpha subunit (338 aa).

Residue E252 coordinates Mg(2+).

This sequence belongs to the class-II aminoacyl-tRNA synthetase family. Phe-tRNA synthetase alpha subunit type 1 subfamily. As to quaternary structure, tetramer of two alpha and two beta subunits. Requires Mg(2+) as cofactor.

Its subcellular location is the cytoplasm. It catalyses the reaction tRNA(Phe) + L-phenylalanine + ATP = L-phenylalanyl-tRNA(Phe) + AMP + diphosphate + H(+). In Mycoplasmoides gallisepticum (strain R(low / passage 15 / clone 2)) (Mycoplasma gallisepticum), this protein is Phenylalanine--tRNA ligase alpha subunit.